We begin with the raw amino-acid sequence, 33 residues long: Cytochrome b6-f complex subunit 8 (33 aa).

Residues Leu2 to Val22 traverse the membrane as a helical segment.

This sequence belongs to the PetN family. As to quaternary structure, the 4 large subunits of the cytochrome b6-f complex are cytochrome b6, subunit IV (17 kDa polypeptide, PetD), cytochrome f and the Rieske protein, while the 4 small subunits are PetG, PetL, PetM and PetN. The complex functions as a dimer.

Its subcellular location is the cellular thylakoid membrane. Its function is as follows. Component of the cytochrome b6-f complex, which mediates electron transfer between photosystem II (PSII) and photosystem I (PSI), cyclic electron flow around PSI, and state transitions. The chain is Cytochrome b6-f complex subunit 8 from Prochlorococcus marinus (strain SARG / CCMP1375 / SS120).